Consider the following 208-residue polypeptide: CASP-like protein 2A1 (208 aa).

At 1–36 the chain is on the cytoplasmic side; sequence MEERSGVLETSRSCKQLIGPEGSDKEFEGYIDSNLR. A helical membrane pass occupies residues 37 to 57; sequence VVETFLRLFPIGLCVTALVIM. Over 58–79 the chain is Extracellular; the sequence is LKNSQENKYGSVSYTDLGAFRY. The chain crosses the membrane as a helical span at residues 80–100; the sequence is LVHANGICAGYSLFSAIFVAL. Residues 101–107 lie on the Cytoplasmic side of the membrane; sequence PRLSSVH. Residues 108 to 128 traverse the membrane as a helical segment; sequence IAWTFFVLDQVLTYIILSAGA. Residues 129–159 are Extracellular-facing; that stretch reads ASAEVLYLAEKGNMATAWSSACRSFGPFCHK. A helical transmembrane segment spans residues 160 to 180; that stretch reads VTASTTITFVVVVFYVLLSLI. Topologically, residues 181-208 are cytoplasmic; sequence SSYKLFSKYDAPTVSNPSMGADIVAFHG.

It belongs to the Casparian strip membrane proteins (CASP) family. As to quaternary structure, homodimer and heterodimers.

Its subcellular location is the cell membrane. The protein is CASP-like protein 2A1 of Glycine max (Soybean).